The following is a 268-amino-acid chain: Gasdermin bGSDM (268 aa).

Residue C3 is the site of S-palmitoyl cysteine attachment. 4 beta stranded membrane-spanning segments follow: residues 78–94 (IDLR…AAKI), 103–121 (APSF…FHIE), 168–185 (KMRM…GVDV), and 195–211 (AKLE…RLVF). The C-terminal region stretch occupies residues 248-268 (GENMALNLFTEIQDAGFIEVT).

Belongs to the bacterial gasdermin family. Monomer in solution. In terms of assembly, forms large, homooligomeric ring-shaped pores when inserted in membranes. Post-translationally, cleavage by the adjacently encoded protease (G563DRAFT_02009) between Leu-247 and Gly-248 relieves autoinhibition, releasing the N-terminus which initiates loss of cell integrity. Palmitoylation helps stabilize the inactive state; may self-palmitoylate. Palmitoylation is not required for permeabilization of liposomes by the ring-like pores in vitro. Palmitoylation plays a significant role in pore formation.

It is found in the cytoplasm. The protein resides in the cell inner membrane. The full-length protein before cleavage is inactive: intramolecular interactions between the N-terminal domain and the C-terminal region, as well as the lipid modification, mediate autoinhibition. The pyroptosis-like-inducing activity is carried by the released N-terminal domain (gasdermin bGSDM, N-terminus). Functionally, precursor of a pore-forming protein involved in defense against bacteriophages. Cleavage of this precursor by its dedicated, neighboring protease (G563DRAFT_02009) releases the active moiety (gasdermin bGSDM, N-terminus) which inserts into membranes, forming pores and triggering cell death. Expression of bGSDM and its protease is highly toxic in E.coli. Cells expressing the gene pair stop dividing and lose membrane integrity. Both proteins are required to kill E.coli. Pore-forming protein that causes membrane permeabilization via a pyroptosis-like activity. Makes ring-like pores with walls about 50 Angstroms thick and an interior pore diameter of 200-300 Angstroms, when integrated in liposomes. The sequence is that of Gasdermin bGSDM from Runella zeae (strain ATCC BAA-293 / DSM 19591 / LMG 21438 / NS12).